The chain runs to 471 residues: MNPTTATDAHERTSLLSGRPQSAANSTAPYERQVQPSRKSQCFTPVTVITIITLIYRLATTMVITTNIRVLHTVACQLWYHVNDPDVFPGGNIPEKYCALPGVDKYYAIMVSMTTVIDGLGGILGTGIASYMSSRFGRKPVLMFLLSCTMIDHLAILTVQNVYGWKQLVTFGLIMIVETIGNENTTVFLVSMYVVDVTEAERRTAALSSITGWLVLGGALAYSIGGSITTFLHSNSAVYIVSFSVTGIVLTFTAFVLPESFPAEKRDLLRLERLAETRGHSQSWTQKIKAVATVALEPMELLKPTFNPITGKANWRLVYCALHSFIVTLADAYALPAMLIFFTTQYSYTPAQMGYVMTTYSVSSVFVLAIALPLFIRWFKPLYNNTQTKSVPDEGDGLRATDSGEAGVHTQEVVVSETSDRMDVHITVISWTIESLAYIVLGTVGSFYAQLLGRPLPLLALDLDAFQEFEA.

A disordered region spans residues 1 to 36; that stretch reads MNPTTATDAHERTSLLSGRPQSAANSTAPYERQVQP. Over residues 14–36 the composition is skewed to polar residues; it reads SLLSGRPQSAANSTAPYERQVQP. N-linked (GlcNAc...) asparagine glycosylation is present at asparagine 25. 8 helical membrane passes run 44–64, 108–128, 140–160, 168–188, 212–232, 237–257, 322–342, and 356–376; these read TPVTVITIITLIYRLATTMVI, AIMVSMTTVIDGLGGILGTGI, PVLMFLLSCTMIDHLAILTVQ, LVTFGLIMIVETIGNENTTVF, GWLVLGGALAYSIGGSITTFL, AVYIVSFSVTGIVLTFTAFVL, LHSFIVTLADAYALPAMLIFF, and VMTTYSVSSVFVLAIALPLFI. Residue asparagine 384 is glycosylated (N-linked (GlcNAc...) asparagine). A helical membrane pass occupies residues 424-444; the sequence is VHITVISWTIESLAYIVLGTV.

The protein belongs to the major facilitator superfamily. TCR/Tet family.

The protein resides in the membrane. In terms of biological role, major facilitator-type transporter; part of the gene cluster that mediates the biosynthesis of psilocybin, a psychotropic tryptamine-derived natural product. The chain is Major facilitator-type transporter psiT1 from Psilocybe cyanescens.